A 240-amino-acid chain; its full sequence is Uridylate kinase (240 aa).

Residue 13-16 (KLSG) participates in ATP binding. The involved in allosteric activation by GTP stretch occupies residues 21–26 (GDKGFG). UMP is bound at residue Gly55. ATP-binding residues include Gly56 and Arg60. Residues Asp75 and 136–143 (IGNPYFST) contribute to the UMP site. Residues Asn164, Tyr170, and Asp173 each coordinate ATP.

This sequence belongs to the UMP kinase family. As to quaternary structure, homohexamer.

The protein localises to the cytoplasm. The enzyme catalyses UMP + ATP = UDP + ADP. The protein operates within pyrimidine metabolism; CTP biosynthesis via de novo pathway; UDP from UMP (UMPK route): step 1/1. With respect to regulation, allosterically activated by GTP. Inhibited by UTP. In terms of biological role, catalyzes the reversible phosphorylation of UMP to UDP. This chain is Uridylate kinase, found in Staphylococcus haemolyticus (strain JCSC1435).